A 170-amino-acid chain; its full sequence is uncharacterized protein (170 aa).

Residues 1 to 28 form the signal peptide; that stretch reads MTGGVMSQKFVVGAGLLVCSVCSLSAMA.

The protein belongs to the fimbrial protein family.

Part of the yfcOPQRSUV fimbrial operon. Could contribute to adhesion to various surfaces in specific environmental niches. Increases adhesion to eukaryotic T24 bladder epithelial cells in the absence of fim genes. This is an uncharacterized protein from Escherichia coli (strain K12).